A 424-amino-acid polypeptide reads, in one-letter code: MGITIVLGSQWGDEGKGKITDMLSQEATLCCRAAGGHNAGHTIVHDNITYDFHILPSGLVSPKCVNLIGAGTVVHVPSFFKELASLEGKGLKGAGKRIFISDRAHVCFDLHSVVDGLEEARLGGRKVGTTGKGIGPCYSDKAARRGVRVGEIMDEAVFERKLRTLHAGYTARFGDLEYDVEEEIGRFKEYRQRLVPYIVDQLAFFKQYKDSPNTLVEGANALMLDLDHGTYPYVTSSSTGLGGAVQALSLNPASITSIIGVVKAYTTRVGSGPFPSEQLNEYGDKLQSVGREFGVTTGRRRRCGWFDLVLCRYSHAINHYTALNLTKLDVLDDFDEIKVGVAYVLPDGTRLTDTYPADAAVQENVKVEYVTLPGWKSNTMGVQKYEDLPANARAYIEYIERELGGVPVKWIGTGPARDHMICRE.

GTP is bound by residues G12–K18 and G40–T42. D13 acts as the Proton acceptor in catalysis. Mg(2+)-binding residues include D13 and G40. IMP-binding positions include D13–K16, N38–H41, T130, R144, N220, T235, and R299. Catalysis depends on H41, which acts as the Proton donor. Residue V295–R301 participates in substrate binding. Residues R301, K327 to D329, and G412 to G414 each bind GTP.

Belongs to the adenylosuccinate synthetase family. Homodimer. Mg(2+) serves as cofactor.

The protein localises to the cytoplasm. The enzyme catalyses IMP + L-aspartate + GTP = N(6)-(1,2-dicarboxyethyl)-AMP + GDP + phosphate + 2 H(+). Its pathway is purine metabolism; AMP biosynthesis via de novo pathway; AMP from IMP: step 1/2. Functionally, plays an important role in the de novo pathway and in the salvage pathway of purine nucleotide biosynthesis. Catalyzes the first committed step in the biosynthesis of AMP from IMP. This Aspergillus clavatus (strain ATCC 1007 / CBS 513.65 / DSM 816 / NCTC 3887 / NRRL 1 / QM 1276 / 107) protein is Adenylosuccinate synthetase.